Here is a 282-residue protein sequence, read N- to C-terminus: Small ribosomal subunit protein uS3 (282 aa).

In terms of domain architecture, KH type-2 spans 43–111 (IRRLMSKGME…QVQLNILEVK (69 aa)). The disordered stretch occupies residues 217 to 282 (AQSQAAAPRA…IGKGSNGTEA (66 aa)). The segment covering 228 to 240 (RRNERGDRPDRGA) has biased composition (basic and acidic residues). Low complexity predominate over residues 256–269 (AVATGSAPTGTAAT).

Belongs to the universal ribosomal protein uS3 family. In terms of assembly, part of the 30S ribosomal subunit. Forms a tight complex with proteins S10 and S14.

Its function is as follows. Binds the lower part of the 30S subunit head. Binds mRNA in the 70S ribosome, positioning it for translation. This is Small ribosomal subunit protein uS3 from Kineococcus radiotolerans (strain ATCC BAA-149 / DSM 14245 / SRS30216).